Here is a 502-residue protein sequence, read N- to C-terminus: ATP synthase subunit alpha (502 aa).

169–176 (GDRATGKT) contributes to the ATP binding site.

Belongs to the ATPase alpha/beta chains family. As to quaternary structure, F-type ATPases have 2 components, CF(1) - the catalytic core - and CF(0) - the membrane proton channel. CF(1) has five subunits: alpha(3), beta(3), gamma(1), delta(1), epsilon(1). CF(0) has three main subunits: a(1), b(2) and c(9-12). The alpha and beta chains form an alternating ring which encloses part of the gamma chain. CF(1) is attached to CF(0) by a central stalk formed by the gamma and epsilon chains, while a peripheral stalk is formed by the delta and b chains.

It is found in the cell inner membrane. It catalyses the reaction ATP + H2O + 4 H(+)(in) = ADP + phosphate + 5 H(+)(out). Its function is as follows. Produces ATP from ADP in the presence of a proton gradient across the membrane. The alpha chain is a regulatory subunit. This Hydrogenobaculum sp. (strain Y04AAS1) protein is ATP synthase subunit alpha.